Here is a 160-residue protein sequence, read N- to C-terminus: Major strawberry allergen Fra a 1-A (160 aa).

It belongs to the BetVI family. In terms of assembly, monomer.

May be involved in ripening of fruits. The polypeptide is Major strawberry allergen Fra a 1-A (Fragaria ananassa (Strawberry)).